Here is a 442-residue protein sequence, read N- to C-terminus: Metacaspase-5 (442 aa).

An N-terminal signal peptide occupies residues 1–18 (MDLLLGVLSSGILQNALP). Positions 19–62 (FVAGVGRVKRPKRVKLEEAFREAHLCRPVIPYRAPTPYTGGRVK) are important for catalytic activity. N-linked (GlcNAc...) asparagine glycosylation is found at asparagine 69 and asparagine 112. Residue histidine 146 is part of the active site. Ca(2+)-binding residues include aspartate 161, aspartate 177, and aspartate 178. Residue cysteine 201 is part of the active site. Aspartate 208 contributes to the Ca(2+) binding site. Residues asparagine 234, asparagine 257, asparagine 282, and asparagine 331 are each glycosylated (N-linked (GlcNAc...) asparagine). The segment at 336-442 (HYVPQQYLQP…QYLSGVGKPL (107 aa)) is negatively regulates catalytic activity. Residues 348-371 (PPQPYYPPPQPQQPYYPPPQPQQP) show a composition bias toward pro residues. The segment at 348–442 (PPQPYYPPPQ…QYLSGVGKPL (95 aa)) is disordered. Over residues 372 to 382 (YYPSSQLPTQY) the composition is skewed to low complexity. Polar residues predominate over residues 422 to 434 (PSDQSTYYSSAQY).

Belongs to the peptidase C14B family. In terms of processing, in epimastigotes, the unprocessed enzyme appears to be the main form. Auto-processing is dispensable for catalytic activity towards small oligopeptide substrates.

It localises to the recycling endosome. Its activity is regulated as follows. Activated by Ca(2+). In terms of biological role, cysteine protease that cleaves specifically after arginine or lysine residues. May play a role in apoptosis. The chain is Metacaspase-5 from Trypanosoma cruzi (strain CL Brener).